The chain runs to 377 residues: MEIPEEPANSGHSLPPVYIYSPEYVSICDSLVKVPKRASMVHSLIEAYALHKQMRIVKPKVASMEEMATFHTDAYLQHLQKVSQEGDEDHPDSIEYGLGYDCPATEGIFDYAAAIGGGTITAAQCLIDGKCKVAINWSGGWHHAKKDEASGFCYLNDAVLGILRLRRKFDRILYVDLDLHHGDGVEDAFSFTSKVMTVSLHKFSPGFFPGTGDMSDVGLGKGRYYSVNVPIQDGIQDEKYYHICESVLKEVYQAFNPKAVVLQLGADTIAGDPMCSFNMTPVGIGKCLKYVLQWQLATLILGGGGYNLANTARCWTYLTGVILGKTLSSEIPDHEFFTAYGPDYVLEITPSCRPDRNEPHRIQQILNYIKGNLKHVV.

A histone deacetylase region spans residues 14–324 (LPPVYIYSPE…WTYLTGVILG (311 aa)). Ser-39 carries the post-translational modification Phosphoserine. Asp-101 lines the substrate pocket. Residue His-143 is the Proton acceptor of the active site. A substrate-binding site is contributed by Gly-151. A divalent metal cation contacts are provided by Asp-178, His-180, and Asp-267. Residue Tyr-306 participates in substrate binding.

The protein belongs to the histone deacetylase family. HD type 1 subfamily. As to quaternary structure, interacts with CBFA2T3. Interacts with phosphorylated SMG5/EST1B; this interaction protects SMG5 from ubiquitin-mediated degradation. Associates with alpha-SMA (smooth muscle alpha-actin). A divalent metal cation serves as cofactor. In terms of processing, phosphorylated by PKA on serine 39. Phosphorylation reduces deacetylase activity observed preferentially on histones H3 and H4.

It is found in the nucleus. The protein localises to the chromosome. The protein resides in the cytoplasm. The catalysed reaction is N(6)-acetyl-L-lysyl-[histone] + H2O = L-lysyl-[histone] + acetate. It catalyses the reaction N(6)-acetyl-L-lysyl-[protein] + H2O = L-lysyl-[protein] + acetate. It carries out the reaction N(6)-(2E)-butenoyl-L-lysyl-[protein] + H2O = (2E)-2-butenoate + L-lysyl-[protein]. Its activity is regulated as follows. Its activity is inhibited by trichostatin A (TSA) and butyrate, 2 well known histone deacetylase inhibitors. Functionally, histone deacetylase that catalyzes the deacetylation of lysine residues on the N-terminal part of the core histones (H2A, H2B, H3 and H4). Histone deacetylation gives a tag for epigenetic repression and plays an important role in transcriptional regulation, cell cycle progression and developmental events. Histone deacetylases act via the formation of large multiprotein complexes. Also involved in the deacetylation of cohesin complex protein SMC3 regulating release of cohesin complexes from chromatin. May play a role in smooth muscle cell contractility. In addition to protein deacetylase activity, also has protein-lysine deacylase activity: acts as a protein decrotonylase by mediating decrotonylation ((2E)-butenoyl) of histones. The protein is Histone deacetylase 8 (Hdac8) of Rattus norvegicus (Rat).